The primary structure comprises 90 residues: Large ribosomal subunit protein eL33 (90 aa).

This sequence belongs to the eukaryotic ribosomal protein eL33 family.

The sequence is that of Large ribosomal subunit protein eL33 from Methanopyrus kandleri (strain AV19 / DSM 6324 / JCM 9639 / NBRC 100938).